Consider the following 143-residue polypeptide: Large ribosomal subunit protein uL16c (143 aa).

Belongs to the universal ribosomal protein uL16 family. Part of the 50S ribosomal subunit.

The protein resides in the plastid. It is found in the chloroplast. The protein is Large ribosomal subunit protein uL16c of Marchantia polymorpha (Common liverwort).